The chain runs to 118 residues: Small ribosomal subunit protein uS13 (118 aa).

The tract at residues 92 to 118 (RRNLPVRGQNTKNNARTRKGPTRPLKR) is disordered. Residues 106–118 (ARTRKGPTRPLKR) show a composition bias toward basic residues.

This sequence belongs to the universal ribosomal protein uS13 family. Part of the 30S ribosomal subunit. Forms a loose heterodimer with protein S19. Forms two bridges to the 50S subunit in the 70S ribosome.

Functionally, located at the top of the head of the 30S subunit, it contacts several helices of the 16S rRNA. In the 70S ribosome it contacts the 23S rRNA (bridge B1a) and protein L5 of the 50S subunit (bridge B1b), connecting the 2 subunits; these bridges are implicated in subunit movement. Contacts the tRNAs in the A and P-sites. This is Small ribosomal subunit protein uS13 from Psychrobacter arcticus (strain DSM 17307 / VKM B-2377 / 273-4).